The following is an 874-amino-acid chain: Alanine--tRNA ligase (874 aa).

Zn(2+) contacts are provided by His-562, His-566, Cys-665, and His-669.

The protein belongs to the class-II aminoacyl-tRNA synthetase family. It depends on Zn(2+) as a cofactor.

The protein resides in the cytoplasm. The catalysed reaction is tRNA(Ala) + L-alanine + ATP = L-alanyl-tRNA(Ala) + AMP + diphosphate. In terms of biological role, catalyzes the attachment of alanine to tRNA(Ala) in a two-step reaction: alanine is first activated by ATP to form Ala-AMP and then transferred to the acceptor end of tRNA(Ala). Also edits incorrectly charged Ser-tRNA(Ala) and Gly-tRNA(Ala) via its editing domain. This is Alanine--tRNA ligase from Pseudomonas fluorescens (strain ATCC BAA-477 / NRRL B-23932 / Pf-5).